The chain runs to 580 residues: High affinity choline transporter 1 (580 aa).

Residues 1–6 (MPFHVE) are Extracellular-facing. Residues 7 to 27 (GLVAIILFYLLIFLVGIWAAW) traverse the membrane as a helical segment. The Cytoplasmic portion of the chain corresponds to 28–48 (KTKNSGNAEERSEAIIVGGRD). Residues 49–69 (IGLLVGGFTMTATWVGGGYIN) form a helical membrane-spanning segment. The Extracellular segment spans residues 70 to 81 (GTAEAVYGPGCG). The helical transmembrane segment at 82–102 (LAWAQAPIGYSLSLILGGLFF) threads the bilayer. Residues 103-125 (AKPMRSKGYVTMLDPFQQIYGKR) are Cytoplasmic-facing. The chain crosses the membrane as a helical span at residues 126–146 (MGGLLFIPALMGEMFWAAAIF). Residues 147 to 164 (SALGATISVIIDVDVNIS) lie on the Extracellular side of the membrane. Residues 165–185 (VIVSALIAILYTLVGGLYSVA) traverse the membrane as a helical segment. Residues 186–191 (YTDVVQ) are Cytoplasmic-facing. A helical membrane pass occupies residues 192 to 212 (LFCIFIGLWISVPFALSHPAV). At 213–237 (TDIGFTAVHAKYQSPWLGTIESVEV) the chain is on the extracellular side. The helical transmembrane segment at 238 to 258 (YTWLDNFLLLMLGGIPWQAYF) threads the bilayer. Residues 259 to 274 (QRVLSSSSATYAQVLS) are Cytoplasmic-facing. The helical transmembrane segment at 275–295 (FLAAFGCLVMALPAICIGAIG) threads the bilayer. Over 296–317 (ASTDWNQTAYGFPDPKTKEEAD) the chain is Extracellular. Residue asparagine 301 is glycosylated (N-linked (GlcNAc...) asparagine). A helical transmembrane segment spans residues 318-338 (MILPIVLQYLCPVYISFFGLG). The Cytoplasmic segment spans residues 339–376 (AVSAAVMSSADSSILSASSMFARNIYQLSFRQNASDKE). Residues 377-397 (IVWVMRITVFVFGASATAMAL) traverse the membrane as a helical segment. Residues 398 to 406 (LTKTVYGLW) are Extracellular-facing. Residues 407 to 427 (YLSSDLVYIIIFPQLLCVLFI) form a helical membrane-spanning segment. Topologically, residues 428-435 (KGTNTYGA) are cytoplasmic. Residues 436-456 (VAGYIFGLFLRITGGEPYLYL) form a helical membrane-spanning segment. At 457–481 (QPLIFYPGYYPDKNGIYNQRFPFKT) the chain is on the extracellular side. A helical membrane pass occupies residues 482-502 (LSMVTSFFTNICVSYLAKYLF). The tract at residues 502-580 (FESGTLPPKL…EGSGTEDNLQ (79 aa)) is mediates interaction with SEC14L1. At 503–580 (ESGTLPPKLD…EGSGTEDNLQ (78 aa)) the chain is on the cytoplasmic side. Positions 527–532 (DKTILV) match the Dileucine-like motif motif.

Belongs to the sodium:solute symporter (SSF) (TC 2.A.21) family. Homooligomerizes at cell surface. Interacts with SEC14L1; may regulate SLC5A7. Post-translationally, phosphorylated. In terms of tissue distribution, expressed in basal forebrain, brain stem, spinal chord, and striatum. Specific for cholinergic neurons.

Its subcellular location is the presynaptic cell membrane. The protein resides in the cell projection. The protein localises to the axon. It localises to the early endosome membrane. It is found in the cytoplasmic vesicle. Its subcellular location is the secretory vesicle. The protein resides in the synaptic vesicle membrane. It catalyses the reaction choline(out) + n Na(+)(out) = choline(in) + n Na(+)(in). Its activity is regulated as follows. Choline uptake activity is regulated by SLC5A7/CHT1 internalization (inactive form) from the cell surface and recycling of internalized SLC5A7/CHT1 into the cell surface (active form). Activated by extracellular chloride ion. Specifically inhibited by nanomolar concentrations of hemicholinium 3. Functionally, high-affinity Na(+)-coupled choline transmembrane symporter. Functions as an electrogenic, voltage-dependent transporter with variable charge/choline stoichiometry. Choline uptake and choline-induced current is also Cl(-)-dependent where Cl(-) is likely a regulatory ion rather than cotransported ion. Plays a critical role in acetylcholine (ACh) synthesis by taking up the substrate choline from the synaptic cleft into the presynaptic nerve terminals after neurotransmitter release. SLC5A7/CHT1-mediated choline high-affinity transport in cholinergic neurons is the rate-limiting step for production of ACh, thereby facilitating communication by subsequent action potentials. Localized predominantly in presynaptic terminal intracellular organelles, and translocated to the plasma membrane in active form in response to neuronal activity. The protein is High affinity choline transporter 1 of Rattus norvegicus (Rat).